We begin with the raw amino-acid sequence, 1025 residues long: Beta-galactosidase (1025 aa).

Substrate is bound by residues asparagine 105 and aspartate 204. Aspartate 204 contributes to the Na(+) binding site. Positions 417, 419, and 462 each coordinate Mg(2+). Residues glutamate 462 and 538-541 (EYAH) contribute to the substrate site. Glutamate 462 (proton donor) is an active-site residue. The Nucleophile role is filled by glutamate 538. Asparagine 598 provides a ligand contact to Mg(2+). Na(+) is bound by residues phenylalanine 602 and asparagine 605. Substrate contacts are provided by asparagine 605 and tryptophan 1003.

The protein belongs to the glycosyl hydrolase 2 family. In terms of assembly, homotetramer. Requires Mg(2+) as cofactor. Na(+) is required as a cofactor.

The catalysed reaction is Hydrolysis of terminal non-reducing beta-D-galactose residues in beta-D-galactosides.. The protein is Beta-galactosidase of Aeromonas hydrophila subsp. hydrophila (strain ATCC 7966 / DSM 30187 / BCRC 13018 / CCUG 14551 / JCM 1027 / KCTC 2358 / NCIMB 9240 / NCTC 8049).